The chain runs to 538 residues: Syncytin-2 (538 aa).

The N-terminal stretch at 1–15 (MGLLLLLLILTPLLA) is a signal peptide. The Extracellular segment spans residues 16 to 478 (AYCHPDFRLL…GWLNWEGTWK (463 aa)). The CXXC signature appears at 43–46 (CWLC). 3 disulfides stabilise this stretch: cysteine 43/cysteine 46, cysteine 43/cysteine 439, and cysteine 431/cysteine 438. N-linked (GlcNAc...) asparagine glycosylation is found at asparagine 146, asparagine 177, asparagine 220, asparagine 241, asparagine 247, asparagine 312, and asparagine 332. Residues 354 to 374 (LIPLLVGLGIVGSAGTGIAGI) are fusion peptide. The short motif at 414–430 (LQNRRGLDMLTAAQGGI) is the CKS-17 element. Positions 431–439 (CLALDEKCC) match the CX6CC motif. Residue asparagine 443 is glycosylated (N-linked (GlcNAc...) asparagine). A helical membrane pass occupies residues 479-499 (WFSWVLPFTGPLVSLLLLLLF). The Cytoplasmic portion of the chain corresponds to 500–538 (GPCLLNLITQFVSSRLQATKLQMKLNKRVHPRNSQESPF).

Belongs to the gamma type-C retroviral envelope protein family. HERV class-I FRD env subfamily. As to quaternary structure, the surface and transmembrane proteins form a heterodimer. They are attached by non-covalent interactions or by a labile interchain disulfide bond. In terms of processing, specific enzymatic cleavages in vivo yield the mature SU and TM proteins. Post-translationally, the CXXC motif is highly conserved across a broad range of retroviral envelope proteins. It is thought to participate in the formation of a labile disulfide bond possibly with the CX6CC motif present in the transmembrane protein.

Its subcellular location is the virion. It is found in the cell membrane. Its function is as follows. This endogenous retroviral envelope protein has retained its original fusogenic properties and participates in trophoblast fusion and the formation of a syncytium during placenta morphogenesis. The interaction with MFSD2A is apparently important for this process. Endogenous envelope proteins may have kept, lost or modified their original function during evolution but this one can still make pseudotypes with MLV, HIV-1 or SIV-1 virions and confer infectivity. Retroviral envelope proteins mediate receptor recognition and membrane fusion during early infection. The surface protein mediates receptor recognition, while the transmembrane protein anchors the envelope heterodimer to the viral membrane through one transmembrane domain. The other hydrophobic domain, called fusion peptide, mediates fusion of the viral membrane with the target cell membrane. This is Syncytin-2 (ERVFRD-1) from Callithrix jacchus (White-tufted-ear marmoset).